Reading from the N-terminus, the 167-residue chain is NAD(P)H-quinone oxidoreductase subunit I, chloroplastic (167 aa).

2 consecutive 4Fe-4S ferredoxin-type domains span residues 55–84 and 95–124; these read GRIHFEFDKCIACEVCVRVCPIDLPVVDWK and LNYSIDFGICIFCGNCVEYCPTNCLSMTEE. [4Fe-4S] cluster-binding residues include Cys64, Cys67, Cys70, Cys74, Cys104, Cys107, Cys110, and Cys114.

It belongs to the complex I 23 kDa subunit family. As to quaternary structure, NDH is composed of at least 16 different subunits, 5 of which are encoded in the nucleus. Requires [4Fe-4S] cluster as cofactor.

Its subcellular location is the plastid. It is found in the chloroplast thylakoid membrane. The catalysed reaction is a plastoquinone + NADH + (n+1) H(+)(in) = a plastoquinol + NAD(+) + n H(+)(out). The enzyme catalyses a plastoquinone + NADPH + (n+1) H(+)(in) = a plastoquinol + NADP(+) + n H(+)(out). Its function is as follows. NDH shuttles electrons from NAD(P)H:plastoquinone, via FMN and iron-sulfur (Fe-S) centers, to quinones in the photosynthetic chain and possibly in a chloroplast respiratory chain. The immediate electron acceptor for the enzyme in this species is believed to be plastoquinone. Couples the redox reaction to proton translocation, and thus conserves the redox energy in a proton gradient. The sequence is that of NAD(P)H-quinone oxidoreductase subunit I, chloroplastic from Barbarea verna (Land cress).